The sequence spans 436 residues: Trigger factor (436 aa).

Positions 161-246 constitute a PPIase FKBP-type domain; that stretch reads GMRVTMDFVG…LNKVEEQILP (86 aa).

This sequence belongs to the FKBP-type PPIase family. Tig subfamily.

Its subcellular location is the cytoplasm. It catalyses the reaction [protein]-peptidylproline (omega=180) = [protein]-peptidylproline (omega=0). Involved in protein export. Acts as a chaperone by maintaining the newly synthesized protein in an open conformation. Functions as a peptidyl-prolyl cis-trans isomerase. This Aeromonas hydrophila subsp. hydrophila (strain ATCC 7966 / DSM 30187 / BCRC 13018 / CCUG 14551 / JCM 1027 / KCTC 2358 / NCIMB 9240 / NCTC 8049) protein is Trigger factor.